The chain runs to 434 residues: Sodium/bile acid cotransporter 5 (434 aa).

An N-terminal signal peptide occupies residues 1–18 (MSGKLFIILLLLVTPGEA). The Extracellular segment spans residues 19 to 129 (RKSFLRFLNI…VSVFRQTEDS (111 aa)). Asn73 and Asn96 each carry an N-linked (GlcNAc...) asparagine glycan. The chain crosses the membrane as a helical span at residues 130 to 150 (LFQEPIHVNSSVFLLVLLMIL). The Cytoplasmic segment spans residues 151–172 (LNKCAFGCKIELQVLQTVWKRP). The helical transmembrane segment at 173–193 (LPILLGAVTQFFLMPFCGFLL) threads the bilayer. Residues 194–195 (SQ) lie on the Extracellular side of the membrane. A helical membrane pass occupies residues 196–216 (ILGLSKAQAFGFVMTCTCPGG). Topologically, residues 217 to 232 (GGGYLFALLLEGDVTL) are cytoplasmic. A helical membrane pass occupies residues 233 to 255 (AILMACTSTSLALIMMPVNSYLY). The Extracellular portion of the chain corresponds to 256-268 (SCLLGLAGVFHVP). Residues 269 to 289 (VLKIVSTLLFILTPVSIGIVI) traverse the membrane as a helical segment. Residues 290 to 306 (KHRMPKKAVCLERVVQP) lie on the Cytoplasmic side of the membrane. A helical transmembrane segment spans residues 307-327 (LSLTLMLVGVYLAFRMGLVFL). The Extracellular segment spans residues 328-331 (RMAN). The chain crosses the membrane as a helical span at residues 332–352 (LEVFLLGLLVPVLGFSFGYSF). The Cytoplasmic portion of the chain corresponds to 353-365 (AKVYLLPLPVCKT). A helical membrane pass occupies residues 366–386 (VAIESGMLNSFLALAIIQLSF). Over 387 to 395 (PQSKAYEAS) the chain is Extracellular. The chain crosses the membrane as a helical span at residues 396 to 416 (VAPFTVAMCSSCEMLLLLLVY). The Cytoplasmic portion of the chain corresponds to 417–434 (KAKKRPLLSTENEKAPLV).

Belongs to the bile acid:sodium symporter (BASS) (TC 2.A.28) family.

Its subcellular location is the membrane. The polypeptide is Sodium/bile acid cotransporter 5 (Slc10a5) (Rattus norvegicus (Rat)).